The chain runs to 319 residues: Ribosomal RNA small subunit methyltransferase H (319 aa).

S-adenosyl-L-methionine contacts are provided by residues 35–37, aspartate 55, phenylalanine 84, aspartate 104, and glutamine 111; that span reads AGH.

Belongs to the methyltransferase superfamily. RsmH family.

The protein resides in the cytoplasm. It carries out the reaction cytidine(1402) in 16S rRNA + S-adenosyl-L-methionine = N(4)-methylcytidine(1402) in 16S rRNA + S-adenosyl-L-homocysteine + H(+). Specifically methylates the N4 position of cytidine in position 1402 (C1402) of 16S rRNA. The polypeptide is Ribosomal RNA small subunit methyltransferase H (Enterococcus hirae).